Reading from the N-terminus, the 918-residue chain is Protein translocase subunit SecA (918 aa).

ATP-binding positions include Q87, 105–109 (GEGKT), and D516. Zn(2+)-binding residues include C902, C904, C913, and H914.

This sequence belongs to the SecA family. As to quaternary structure, monomer and homodimer. Part of the essential Sec protein translocation apparatus which comprises SecA, SecYEG and auxiliary proteins SecDF-YajC and YidC. The cofactor is Zn(2+).

It is found in the cell inner membrane. Its subcellular location is the cytoplasm. It catalyses the reaction ATP + H2O + cellular proteinSide 1 = ADP + phosphate + cellular proteinSide 2.. In terms of biological role, part of the Sec protein translocase complex. Interacts with the SecYEG preprotein conducting channel. Has a central role in coupling the hydrolysis of ATP to the transfer of proteins into and across the cell membrane, serving both as a receptor for the preprotein-SecB complex and as an ATP-driven molecular motor driving the stepwise translocation of polypeptide chains across the membrane. This Methylibium petroleiphilum (strain ATCC BAA-1232 / LMG 22953 / PM1) protein is Protein translocase subunit SecA.